Consider the following 465-residue polypeptide: MDKNSQLRDMNLFRAPAARAAKTLDRSVFAKTLNAAAASISENRLLSKYRKELEKTQEVLFMERFNPILPDPDPSLASQGRKCIVLSPQIKPASPETWSPTLQEASKLGELKVVPYDLEITYDFWNYFDVVKSILPEELHGEIPSGFNTVGHVAHLNIRDQYLPYKNIIAQVLLDKNPHIKTVINKIDNVGSENEFRTFAYEVLGGPDNMNVEVSEAGCIFRFDYSKVYWNSKLDTEHKRITSFFKPGEVVADVMAGIGPFAVPAGKKGVFVWANDKNPESHRYLEDAIQKNKVWEFVKPFNHDGHDFIRTSADLVLEASKRGDCAVIKPPRPPRKSAAPPPEPVRVPVPPTISHFVMNLPASAIEFLHNYRGLYHGHEDLFEPHTETKLPIVHVHCFSAKMDDDTPLKDICERIHKEIGVMLKPGDAEKEGEVLIYDVRDVAPAKRMFCASFRLPREVAFAARA.

The N-terminal 20 residues, 1–20 (MDKNSQLRDMNLFRAPAARA), are a transit peptide targeting the mitochondrion. Residues His238 and 304 to 305 (DG) each bind S-adenosyl-L-methionine. The interval 326–345 (AVIKPPRPPRKSAAPPPEPV) is disordered. Asn359 serves as a coordination point for S-adenosyl-L-methionine.

It belongs to the class I-like SAM-binding methyltransferase superfamily. TRM5/TYW2 family. In terms of assembly, monomer.

Its subcellular location is the mitochondrion matrix. It localises to the nucleus. It is found in the cytoplasm. It catalyses the reaction guanosine(37) in tRNA + S-adenosyl-L-methionine = N(1)-methylguanosine(37) in tRNA + S-adenosyl-L-homocysteine + H(+). Functionally, specifically methylates the N1 position of guanosine-37 in various cytoplasmic and mitochondrial tRNAs. Methylation is not dependent on the nature of the nucleoside 5' of the target nucleoside. This is the first step in the biosynthesis of wybutosine (yW), a modified base adjacent to the anticodon of tRNAs and required for accurate decoding. The polypeptide is tRNA (guanine(37)-N(1))-methyltransferase (Fusarium vanettenii (strain ATCC MYA-4622 / CBS 123669 / FGSC 9596 / NRRL 45880 / 77-13-4) (Fusarium solani subsp. pisi)).